Here is a 547-residue protein sequence, read N- to C-terminus: Sterol carrier protein 2 (547 aa).

A phosphoserine mark is found at Ser-3 and Ser-8. An N6-succinyllysine modification is found at Lys-40. Lys-132 bears the N6-acetyllysine; alternate mark. Lys-132 is modified (N6-succinyllysine; alternate). Lys-168 carries the N6-succinyllysine modification. Lys-177 is subject to N6-acetyllysine. N6-acetyllysine; alternate is present on Lys-183. Lys-183 bears the N6-succinyllysine; alternate mark. N6-succinyllysine occurs at positions 211 and 282. N6-acetyllysine; alternate occurs at positions 341, 432, 438, 443, and 453. 5 positions are modified to N6-succinyllysine; alternate: Lys-341, Lys-432, Lys-438, Lys-443, and Lys-453. An SCP2 domain is found at Ala-433–Asp-543. At Lys-464 the chain carries N6-succinyllysine. At Lys-470 the chain carries N6-acetyllysine; alternate. Lys-470 is modified (N6-succinyllysine; alternate). The residue at position 479 (Lys-479) is an N6-succinyllysine. An N6-acetyllysine modification is found at Lys-491. Residues Lys-492 and Lys-511 each carry the N6-succinyllysine modification. Phosphoserine is present on Ser-516. Lys-522 and Lys-534 each carry N6-succinyllysine. Residue Ser-537 is modified to Phosphoserine. Lys-544 is subject to N6-succinyllysine. A Microbody targeting signal motif is present at residues Ala-545–Leu-547.

It in the N-terminal section; belongs to the thiolase-like superfamily. Thiolase family. As to quaternary structure, interacts with PEX5; the interaction is essential for peroxisomal import. PreSCP2, a protein with a molecular mass of about 15 kDa, is processed into its mature form (SCP2) by proteolytic cleavage of a 20 residue leader sequence after translocation into peroxisomes. Liver &gt; intestine &gt; brain &gt; lung, colon, stomach, spleen, kidney, heart and ovary. In terms of tissue distribution, expressed in liver (at protein level).

It localises to the peroxisome. It is found in the cytoplasm. The protein localises to the mitochondrion. It catalyses the reaction an acyl-CoA + acetyl-CoA = a 3-oxoacyl-CoA + CoA. The enzyme catalyses choloyl-CoA + propanoyl-CoA = 3alpha,7alpha,12alpha-trihydroxy-24-oxo-5beta-cholestan-26-oyl-CoA + CoA. It carries out the reaction 4,8,12-trimethyltridecanoyl-CoA + propanoyl-CoA = 3-oxopristanoyl-CoA + CoA. The catalysed reaction is hexanoyl-CoA + acetyl-CoA = 3-oxooctanoyl-CoA + CoA. It catalyses the reaction tetradecanoyl-CoA + acetyl-CoA = 3-oxohexadecanoyl-CoA + CoA. The enzyme catalyses 3-oxohexadecanedioyl-CoA + CoA = tetradecanedioyl-CoA + acetyl-CoA. It carries out the reaction propanoyl-CoA + tetradecanoyl-CoA = 3-oxo-2-methylhexadecanoyl-CoA + CoA. The catalysed reaction is butanoyl-CoA + acetyl-CoA = 3-oxohexanoyl-CoA + CoA. It catalyses the reaction octanoyl-CoA + acetyl-CoA = 3-oxodecanoyl-CoA + CoA. The enzyme catalyses decanoyl-CoA + acetyl-CoA = 3-oxododecanoyl-CoA + CoA. It carries out the reaction dodecanoyl-CoA + acetyl-CoA = 3-oxotetradecanoyl-CoA + CoA. The catalysed reaction is hexadecanoyl-CoA + acetyl-CoA = 3-oxooctadecanoyl-CoA + CoA. It catalyses the reaction 3-oxo-(9Z-octadecenoyl)-CoA + CoA = (7Z)-hexadecenoyl-CoA + acetyl-CoA. The enzyme catalyses 7-dehydrocholesterol(in) = 7-dehydrocholesterol(out). Its function is as follows. Plays a crucial role in the peroxisomal oxidation of branched-chain fatty acids. Catalyzes the last step of the peroxisomal beta-oxidation of branched chain fatty acids and the side chain of the bile acid intermediates di- and trihydroxycoprostanic acids (DHCA and THCA). Also active with medium and long straight chain 3-oxoacyl-CoAs. Stimulates the microsomal conversion of 7-dehydrocholesterol to cholesterol and transfers phosphatidylcholine and 7-dehydrocholesterol between membrances, in vitro. Isoforms SCP2 and SCPx cooperate in peroxisomal oxidation of certain naturally occurring tetramethyl-branched fatty acyl-CoAs. Functionally, mediates the transfer of all common phospholipids, cholesterol and gangliosides from the endoplasmic reticulum to the plasma membrane. May play a role in regulating steroidogenesis. Stimulates the microsomal conversion of 7-dehydrocholesterol to cholesterol. Also binds fatty acids and fatty acyl Coenzyme A (CoA) such as phytanoyl-CoA. Involved in the regulation phospholipid synthesis in endoplasmic reticulum enhancing the incorporation of exogenous fatty acid into glycerides. Seems to stimulate the rate-limiting step in phosphatidic acid formation mediated by GPAT3. Isoforms SCP2 and SCPx cooperate in peroxisomal oxidation of certain naturally occurring tetramethyl-branched fatty acyl-CoAs. The protein is Sterol carrier protein 2 of Rattus norvegicus (Rat).